We begin with the raw amino-acid sequence, 421 residues long: Gamma-glutamyl phosphate reductase (421 aa).

This sequence belongs to the gamma-glutamyl phosphate reductase family.

Its subcellular location is the cytoplasm. The enzyme catalyses L-glutamate 5-semialdehyde + phosphate + NADP(+) = L-glutamyl 5-phosphate + NADPH + H(+). It functions in the pathway amino-acid biosynthesis; L-proline biosynthesis; L-glutamate 5-semialdehyde from L-glutamate: step 2/2. Catalyzes the NADPH-dependent reduction of L-glutamate 5-phosphate into L-glutamate 5-semialdehyde and phosphate. The product spontaneously undergoes cyclization to form 1-pyrroline-5-carboxylate. This is Gamma-glutamyl phosphate reductase from Leifsonia xyli subsp. xyli (strain CTCB07).